We begin with the raw amino-acid sequence, 682 residues long: L-type lectin-domain containing receptor kinase VI.2 (682 aa).

An N-terminal signal peptide occupies residues 1–26 (MGTQRSMFIVSFLFKLFLFLSVHVRA). At 27 to 310 (QRTTTNFAFR…AKKEGLNSQV (284 aa)) the chain is on the extracellular side. Residues 29–277 (TTTNFAFRGF…AHYVMGWSFS (249 aa)) form a legume-lectin like region. A helical transmembrane segment spans residues 311 to 331 (IVMIVALSAVMLVMLVLLFFF). At 332–682 (VMYKKRLGQE…RVSSTSRISQ (351 aa)) the chain is on the cytoplasmic side. Positions 367–641 (FKKTGIIGTG…LRYLNGEENV (275 aa)) constitute a Protein kinase domain. ATP is bound by residues 373-381 (IGTGGFGTV) and K395. The active-site Proton acceptor is the D494.

This sequence in the C-terminal section; belongs to the protein kinase superfamily. Ser/Thr protein kinase family. In the N-terminal section; belongs to the leguminous lectin family. Strongly expressed in the vascular system and trichomes of the leaves. Also expressed in guard cells, anthers, stigmas and germinating seeds, but not found in petals or roots. Increased susceptibility to the bacteria Pseudomonas syringae, characterized by stronger necrotic symptoms and higher bacterial proliferation.

Its subcellular location is the cell membrane. The catalysed reaction is L-seryl-[protein] + ATP = O-phospho-L-seryl-[protein] + ADP + H(+). The enzyme catalyses L-threonyl-[protein] + ATP = O-phospho-L-threonyl-[protein] + ADP + H(+). In terms of biological role, involved in negative regulation of abscisic acid response in seed germination. Functionally, involved in resistance response to the pathogenic bacteria Pseudomonas syringae. This Arabidopsis thaliana (Mouse-ear cress) protein is L-type lectin-domain containing receptor kinase VI.2.